The following is a 187-amino-acid chain: MLDSVKRADVFLRKPAPVAPELQHEIEQFYYWEAKLLNDRRFEEWFALLAADIHYFMPIRTTRIMRDARLEYSGTGEHAHFDDDAAMMKGRLRKVTSDVGWSENPASRTRHLVSNVMIADGPVEGEYEISSAFIVYRNRLERQLDIFAGERRDTLRRNKTETGFEIVNRTILIDQSTILANNLSFFF.

Belongs to the bacterial ring-hydroxylating dioxygenase beta subunit family. This dioxygenase system consists of four proteins: the two subunits of the oxygenase component (TecA1 and TecA2), a ferredoxin (TecA3) and a ferredoxin reductase (TecA4).

The enzyme catalyses chlorobenzene + NADH + O2 + H(+) = (1R,2R)-3-chlorocyclohexa-3,5-diene-1,2-diol + NAD(+). It functions in the pathway aromatic compound metabolism. Its function is as follows. Part of the oxygenase component of the chlorobenzene dioxygenase system that catalyzes the dihydroxylation of a range of aromatic compounds, including chlorinated benzenes and toluenes, and dinuclear aromatics such as biphenyl and dibenzo-p-dioxin. The beta subunit is not directly involved in the control of substrate specificity. In Cupriavidus sp. (strain PS12), this protein is Chlorobenzene dioxygenase subunit beta.